The chain runs to 189 residues: Peptidyl-tRNA hydrolase (189 aa).

Tyrosine 15 contacts tRNA. Histidine 20 serves as the catalytic Proton acceptor. Residues phenylalanine 66, asparagine 68, and asparagine 114 each coordinate tRNA.

Belongs to the PTH family. As to quaternary structure, monomer.

The protein localises to the cytoplasm. The catalysed reaction is an N-acyl-L-alpha-aminoacyl-tRNA + H2O = an N-acyl-L-amino acid + a tRNA + H(+). Functionally, hydrolyzes ribosome-free peptidyl-tRNAs (with 1 or more amino acids incorporated), which drop off the ribosome during protein synthesis, or as a result of ribosome stalling. Catalyzes the release of premature peptidyl moieties from peptidyl-tRNA molecules trapped in stalled 50S ribosomal subunits, and thus maintains levels of free tRNAs and 50S ribosomes. This Streptococcus pyogenes serotype M6 (strain ATCC BAA-946 / MGAS10394) protein is Peptidyl-tRNA hydrolase.